A 226-amino-acid polypeptide reads, in one-letter code: Phosphoglycolate phosphatase (226 aa).

Asp9 functions as the Nucleophile in the catalytic mechanism. Mg(2+) contacts are provided by Asp9 and Asp11. Residue Lys150 participates in substrate binding. 2 residues coordinate Mg(2+): Asp173 and Asp177.

Belongs to the archaeal SPP-like hydrolase family. The cofactor is Mg(2+).

It catalyses the reaction 2-phosphoglycolate + H2O = glycolate + phosphate. Functionally, catalyzes the dephosphorylation of 2-phosphoglycolate. In Methanosarcina acetivorans (strain ATCC 35395 / DSM 2834 / JCM 12185 / C2A), this protein is Phosphoglycolate phosphatase.